The primary structure comprises 134 residues: Small ribosomal subunit protein bS6 (134 aa).

Residues 103 to 134 (AAPVKSAEEGTEEVAAEAATEAPAETTTTVEG) form a disordered region. Positions 118–134 (AEAATEAPAETTTTVEG) are enriched in low complexity.

Belongs to the bacterial ribosomal protein bS6 family.

Its function is as follows. Binds together with bS18 to 16S ribosomal RNA. This Citrifermentans bemidjiense (strain ATCC BAA-1014 / DSM 16622 / JCM 12645 / Bem) (Geobacter bemidjiensis) protein is Small ribosomal subunit protein bS6.